A 304-amino-acid chain; its full sequence is Oxygen-dependent coproporphyrinogen-III oxidase (304 aa).

Ser-94 is a substrate binding site. A divalent metal cation contacts are provided by His-98 and His-108. His-108 functions as the Proton donor in the catalytic mechanism. 110–112 contributes to the substrate binding site; it reads NVR. 2 residues coordinate a divalent metal cation: His-147 and His-177. An important for dimerization region spans residues 242–277; sequence YVEFNLVYDRGTLFGLQTGGRTESILMSMPPLVRWE. Residue 260–262 participates in substrate binding; that stretch reads GGR.

Belongs to the aerobic coproporphyrinogen-III oxidase family. As to quaternary structure, homodimer. The cofactor is a divalent metal cation.

Its subcellular location is the cytoplasm. It carries out the reaction coproporphyrinogen III + O2 + 2 H(+) = protoporphyrinogen IX + 2 CO2 + 2 H2O. It participates in porphyrin-containing compound metabolism; protoporphyrin-IX biosynthesis; protoporphyrinogen-IX from coproporphyrinogen-III (O2 route): step 1/1. Functionally, involved in the heme biosynthesis. Catalyzes the aerobic oxidative decarboxylation of propionate groups of rings A and B of coproporphyrinogen-III to yield the vinyl groups in protoporphyrinogen-IX. The chain is Oxygen-dependent coproporphyrinogen-III oxidase from Shewanella pealeana (strain ATCC 700345 / ANG-SQ1).